The sequence spans 1458 residues: Anaphase-promoting complex subunit 1 (1458 aa).

The segment at 186 to 210 (QSIKSSRNRRRESSFSREKNPDLTR) is disordered. Residues 196-210 (RESSFSREKNPDLTR) show a composition bias toward basic and acidic residues. PC repeat units follow at residues 873 to 895 (GLLL…KLLS), 959 to 982 (AAGF…SDLK), 1006 to 1024 (GAIM…LEVA), and 1099 to 1124 (GICF…INFL).

It belongs to the APC1 family. In terms of assembly, the APC/C is composed of at least 13 subunits: apc1, apc2, nuc2, apc4, apc5, cut9, apc8, apc10, apc11, hcn1, apc13, apc14 and apc15.

Component of the anaphase-promoting complex/cyclosome (APC/C), a cell cycle-regulated E3 ubiquitin-protein ligase complex that controls progression through mitosis and the G1 phase of the cell cycle. The APC/C is thought to confer substrate specificity and, in the presence of ubiquitin-conjugating E2 enzymes, it catalyzes the formation of protein-ubiquitin conjugates that are subsequently degraded by the 26S proteasome. Mutations to this protein prevent the exit from mitosis. In Schizosaccharomyces pombe (strain 972 / ATCC 24843) (Fission yeast), this protein is Anaphase-promoting complex subunit 1 (cut4).